Reading from the N-terminus, the 102-residue chain is ATP-dependent Clp protease adapter protein ClpS (102 aa).

Belongs to the ClpS family. In terms of assembly, binds to the N-terminal domain of the chaperone ClpA.

Involved in the modulation of the specificity of the ClpAP-mediated ATP-dependent protein degradation. In Wolinella succinogenes (strain ATCC 29543 / DSM 1740 / CCUG 13145 / JCM 31913 / LMG 7466 / NCTC 11488 / FDC 602W) (Vibrio succinogenes), this protein is ATP-dependent Clp protease adapter protein ClpS.